We begin with the raw amino-acid sequence, 421 residues long: Aspartokinase (421 aa).

Residue 7–10 (KYGG) participates in ATP binding. Residue 25-30 (RIVATK) coordinates substrate. Serine 41 is an ATP binding site. Residues 45–49 (DTTDE), glutamate 74, 125–126 (LD), 151–154 (RGGS), and serine 154 contribute to the substrate site. ATP-binding positions include 174–175 (SD), 180–185 (YTADPR), and lysine 210. ACT domains follow at residues 267-343 (VTVL…YDDQ) and 349-421 (LVGA…GTGR). Substrate contacts are provided by residues aspartate 274, 274–279 (DKPGEA), 292–294 (NID), glutamine 298, 360–361 (VT), 374–375 (NI), and 381–382 (SE).

Belongs to the aspartokinase family. In terms of assembly, tetramer consisting of 2 isoforms Alpha (catalytic and regulation) and of a homodimer of 2 isoforms Beta (regulation). The dimerization of the beta isoforms is stabilized by the bonding of threonine.

The catalysed reaction is L-aspartate + ATP = 4-phospho-L-aspartate + ADP. The protein operates within amino-acid biosynthesis; L-lysine biosynthesis via DAP pathway; (S)-tetrahydrodipicolinate from L-aspartate: step 1/4. Its pathway is amino-acid biosynthesis; L-methionine biosynthesis via de novo pathway; L-homoserine from L-aspartate: step 1/3. It participates in amino-acid biosynthesis; L-threonine biosynthesis; L-threonine from L-aspartate: step 1/5. Its activity is regulated as follows. Feedback inhibition by lysine and threonine, but he enzyme is moderately inhibited by lysine alone, and threonine alone has no effect. Catalyzes the phosphorylation of the beta-carboxyl group of aspartic acid with ATP to yield 4-phospho-L-aspartate, which is involved in the branched biosynthetic pathway leading to the biosynthesis of amino acids lysine, threonine, isoleucine and methionine. This chain is Aspartokinase (lysC), found in Corynebacterium glutamicum (strain ATCC 13032 / DSM 20300 / JCM 1318 / BCRC 11384 / CCUG 27702 / LMG 3730 / NBRC 12168 / NCIMB 10025 / NRRL B-2784 / 534).